A 613-amino-acid polypeptide reads, in one-letter code: Zinc finger protein 665 (613 aa).

18 consecutive C2H2-type zinc fingers follow at residues 113-135 (YKCDECGKVFNQNSRLTSHKRIH), 141-163 (YRCNECGKAFTVRSNLTIHQVIH), 169-191 (YKCNECGKVFSQPSNLAGHQRIH), 197-219 (YKCNECGKAFRAHSKLTTHQVIH), 225-247 (YKCNECGKCFTQNSHLASHRRIH), 253-275 (YKCNECGKAFSVRSSLTTHQTIH), 281-303 (YKCNECGKVFRHNSYLTKHRRVH), 309-331 (YKCNECGKAFSMHSNLTKHQIIH), 337-359 (FKCNECVKVFTQYSHLANHRRIH), 365-387 (YRCDECGKAFSVRSSLTTHQAIH), 393-415 (YKCNDCGKVFTQNSHLASHRGIH), 421-443 (YKCDECGKAFSQTSQLARHWRVH), 449-471 (YKCNECGKAFSVHSSLTTHQTIH), 477-499 (YKCNDCGKVFRHNSYLAVHQRIH), 505-527 (YKCNECGKAFSVHSNLATHQVIH), 533-555 (YKCNECGKVFTQNSHLANHRRIH), 561-583 (YRCNECGKAFSVRSTLTTHMAIH), and 589-611 (YKCNECGKVFTQNSNLAKHRRIH).

It belongs to the krueppel C2H2-type zinc-finger protein family.

Its subcellular location is the nucleus. Its function is as follows. May be involved in transcriptional regulation. The sequence is that of Zinc finger protein 665 (ZNF665) from Pongo abelii (Sumatran orangutan).